The following is a 258-amino-acid chain: Small ribosomal subunit protein mS40 (258 aa).

The transit peptide at Met1 to Lys35 directs the protein to the mitochondrion. Ser49 bears the Phosphoserine mark. The disordered stretch occupies residues Gln221–Leu258. Residues Asn244–Leu258 show a composition bias toward polar residues.

It belongs to the bacterial ribosomal protein bS18 family. Mitochondrion-specific ribosomal protein mS40 subfamily. As to quaternary structure, component of the mitochondrial ribosome small subunit (28S) which comprises a 12S rRNA and about 30 distinct proteins.

The protein localises to the mitochondrion. The sequence is that of Small ribosomal subunit protein mS40 from Bos taurus (Bovine).